The chain runs to 174 residues: MLLALRRKAIHGIRFSSGKCGQNLSGSTIGPKFTSDKEVEEFLSKSTWDVREYVPSSVDEKLIPSEETVVRLLKISGLPIKNIDQIQIRLANQLSFINRLHNLPVDENINPNHARIIERNPTPLDYEGLIKGIASQQKSDSLGEISGSWDPTKTAAVKRDGFFILREGLLKGRD.

This sequence belongs to the GatF family. In terms of assembly, subunit of the heterotrimeric GatFAB amidotransferase (AdT) complex, composed of A, B and F subunits.

It is found in the mitochondrion inner membrane. It catalyses the reaction L-glutamyl-tRNA(Gln) + L-glutamine + ATP + H2O = L-glutaminyl-tRNA(Gln) + L-glutamate + ADP + phosphate + H(+). Allows the formation of correctly charged Gln-tRNA(Gln) through the transamidation of misacylated Glu-tRNA(Gln) in the mitochondria. The reaction takes place in the presence of glutamine and ATP through an activated gamma-phospho-Glu-tRNA(Gln). Required for proper protein synthesis within the mitochondrion. This is Glutamyl-tRNA(Gln) amidotransferase subunit F, mitochondrial from Kluyveromyces lactis (strain ATCC 8585 / CBS 2359 / DSM 70799 / NBRC 1267 / NRRL Y-1140 / WM37) (Yeast).